We begin with the raw amino-acid sequence, 215 residues long: Ras-related protein Rab-5B (215 aa).

Thr-2 is modified (N-acetylthreonine). GTP is bound by residues Ser-29, Ala-30, Gly-32, Lys-33, Ser-34, Ser-35, His-46, Glu-47, Thr-52, and Gly-78. Ser-34 is a binding site for Mg(2+). Short sequence motifs (switch) lie at residues 44 to 56 (QFHEYQESTIGAA) and 77 to 93 (AGQERYHSLAPMYYRGA). Thr-52 is a binding site for Mg(2+). Ser-84 is modified (phosphoserine; by LRRK2). The GTP site is built by Asn-133, Lys-134, Asp-136, Ala-164, and Lys-165. Residues 186–215 (PQNLGGAAGRSRGVDLHEQSQQNKSQCCSN) form a disordered region. Positions 204 to 215 (QSQQNKSQCCSN) are enriched in low complexity. S-geranylgeranyl cysteine attachment occurs at residues Cys-212 and Cys-213.

This sequence belongs to the small GTPase superfamily. Rab family. As to quaternary structure, binds EEA1. Interacts with RIN2 and RIN3, which probably regulate its pathway, possibly by acting as GEFs. Interacts with GDI1, GDI2, CHML and CHM; phosphorylation at Ser-84 disrupts this interaction. Mg(2+) is required as a cofactor. Phosphorylation of Ser-84 in the switch II region by LRRK2 prevents the association of RAB regulatory proteins, including CHM, CHML and RAB GDP dissociation inhibitors GDI1 and GDI2. Post-translationally, (Microbial infection) Glycosylated on arginine residues by S.typhimurium protein Ssek3.

Its subcellular location is the cell membrane. It is found in the early endosome membrane. It localises to the melanosome. It catalyses the reaction GTP + H2O = GDP + phosphate + H(+). Its activity is regulated as follows. Regulated by guanine nucleotide exchange factors (GEFs) which promote the exchange of bound GDP for free GTP. Regulated by GTPase activating proteins (GAPs) which increase the GTP hydrolysis activity. Inhibited by GDP dissociation inhibitors (GDIs). The small GTPases Rab are key regulators of intracellular membrane trafficking, from the formation of transport vesicles to their fusion with membranes. Rabs cycle between an inactive GDP-bound form and an active GTP-bound form that is able to recruit to membranes different sets of downstream effectors directly responsible for vesicle formation, movement, tethering and fusion. The sequence is that of Ras-related protein Rab-5B from Homo sapiens (Human).